The chain runs to 1708 residues: 187-kDa microtubule-associated protein AIR9 (1708 aa).

The span at 67 to 93 (SSLRVSGTTPVTIRRNSTGGVTENLAG) shows a compositional bias: polar residues. The disordered stretch occupies residues 67–255 (SSLRVSGTTP…KTSTPESRDS (189 aa)). A compositionally biased stretch (basic and acidic residues) spans 110-121 (DPVRRSLPELRK). Over residues 122-134 (SSVSSLSAKTVSK) the composition is skewed to low complexity. The span at 149 to 165 (GSRSLTKSTGFSLSKPE) shows a compositional bias: polar residues. The span at 173–234 (SVSVSSKRAP…SIRSKSFSSP (62 aa)) shows a compositional bias: low complexity. LRR repeat units lie at residues 267 to 290 (AGDD…GLHL), 291 to 315 (SPNL…ILNR), 316 to 335 (VKVL…EPLE), 337 to 359 (CKML…LPQL), 360 to 382 (PNLE…SQPR), 384 to 402 (QVLA…FPYL), and 403 to 425 (PVLE…EAAS). A9 repeat units follow at residues 489–584 (PSGY…FAIS), 601–682 (LNGE…QYKY), 698–777 (ITGD…VSTS), 793–878 (IVGD…VYVL), 895–977 (ITGD…RSCM), 994–1073 (VVGA…AISE), 1090–1167 (FLGS…RSIR), 1183–1272 (IPDC…VVVI), 1287–1365 (VRVK…KMSE), 1382–1473 (FTGK…AYAE), and 1489–1569 (IEGQ…VSAS).

In terms of assembly, interacts with KCBP. As to expression, strongly expressed in dividing cells, like the meristemic region of the root tip.

The protein resides in the cytoplasm. Its subcellular location is the cell cortex. It is found in the cytoskeleton. The protein localises to the phragmoplast. Microtubule-associated protein that may be involved in the maturation of cell plates and proper insertion of cross-walls after cytokinesis. This Arabidopsis thaliana (Mouse-ear cress) protein is 187-kDa microtubule-associated protein AIR9.